The following is a 268-amino-acid chain: Ubiquinone biosynthesis protein COQ4 homolog, mitochondrial (268 aa).

The Zn(2+) site is built by His171, Asp172, His175, and Glu187.

It belongs to the COQ4 family. In terms of assembly, component of a multi-subunit COQ enzyme complex. The cofactor is Zn(2+).

Its subcellular location is the mitochondrion inner membrane. The enzyme catalyses a 4-hydroxy-3-methoxy-5-(all-trans-polyprenyl)benzoate + H(+) = a 2-methoxy-6-(all-trans-polyprenyl)phenol + CO2. Its pathway is cofactor biosynthesis; ubiquinone biosynthesis. In terms of biological role, lyase that catalyzes the C1-decarboxylation of 4-hydroxy-3-methoxy-5-(all-trans-polyprenyl)benzoic acid into 2-methoxy-6-(all-trans-polyprenyl)phenol during ubiquinone biosynthesis. The chain is Ubiquinone biosynthesis protein COQ4 homolog, mitochondrial from Drosophila sechellia (Fruit fly).